The primary structure comprises 1205 residues: Nitric oxide synthase 3 (1205 aa).

Disordered stretches follow at residues 1–20 (MGNLKSVGQEPGPPCGLGLG) and 26–73 (CGKQ…FPRV). Over residues 33-47 (SPAPEPSWAPAPATP) the composition is skewed to pro residues. Residues Cys-96 and Cys-101 each coordinate Zn(2+). Positions 100-489 (RCLGSLVLPR…PDPWKGSAAK (390 aa)) are interaction with NOSIP. Ser-104 provides a ligand contact to (6R)-L-erythro-5,6,7,8-tetrahydrobiopterin. Ser-116 carries the post-translational modification Phosphoserine. Cys-186 lines the heme b pocket. The L-arginine site is built by Gln-250, Trp-359, Tyr-360, and Glu-364. Arg-368 is a binding site for (6R)-L-erythro-5,6,7,8-tetrahydrobiopterin. Asn-369 lines the L-arginine pocket. Ala-449, Trp-450, and Phe-463 together coordinate (6R)-L-erythro-5,6,7,8-tetrahydrobiopterin. Tyr-478 lines the heme b pocket. Thr-498 carries the post-translational modification Phosphothreonine. Ser-529, Glu-530, Thr-531, Arg-533, Ser-575, and Thr-576 together coordinate FMN. Phosphoserine occurs at positions 618, 636, and 641. 4 residues coordinate FMN: Ser-657, Cys-664, Glu-690, and Gln-694. Arg-781 lines the NADP(+) pocket. The segment at 796–850 (LQYQPGDHISPHPPPRSSHRPGQGGPRVAPFSERPLMPRTPPPGGPPPSWVRDPR) is disordered. His-803 contacts FAD. A compositionally biased stretch (pro residues) spans 833-844 (PRTPPPGGPPPS). Residues Arg-939, Tyr-941, Ser-942, Thr-957, and Ala-959 each contribute to the FAD site. Residues Thr-1018, Arg-1051, Ser-1080, Arg-1081, Lys-1087, Tyr-1089, and Gln-1091 each contribute to the NADP(+) site. Phosphothreonine is present on Thr-1177. A phosphoserine mark is found at Ser-1179 and Ser-1181.

It belongs to the NOS family. Homodimer. Interacts with NOSIP and NOSTRIN. Interacts with HSP90AB1. Forms a complex with ASL, ASS1 and SLC7A1; the complex regulates cell-autonomous L-arginine synthesis and citrulline recycling while channeling extracellular L-arginine to nitric oxide synthesis pathway. Heme b is required as a cofactor. It depends on FAD as a cofactor. Requires FMN as cofactor. (6R)-L-erythro-5,6,7,8-tetrahydrobiopterin serves as cofactor.

The protein resides in the membrane. The protein localises to the caveola. It is found in the cytoplasm. It localises to the cytoskeleton. Its subcellular location is the golgi apparatus. The protein resides in the cell membrane. It carries out the reaction 2 L-arginine + 3 NADPH + 4 O2 + H(+) = 2 L-citrulline + 2 nitric oxide + 3 NADP(+) + 4 H2O. Its activity is regulated as follows. Stimulated by calcium/calmodulin. Inhibited by NOSIP and NOSTRIN. Functionally, produces nitric oxide (NO) which is implicated in vascular smooth muscle relaxation through a cGMP-mediated signal transduction pathway. NO mediates vascular endothelial growth factor (VEGF)-induced angiogenesis in coronary vessels and promotes blood clotting through the activation of platelets. This chain is Nitric oxide synthase 3 (NOS3), found in Ovis aries (Sheep).